The primary structure comprises 396 residues: Ornithine aminotransferase 2 (396 aa).

Position 255 is an N6-(pyridoxal phosphate)lysine (lysine 255).

It belongs to the class-III pyridoxal-phosphate-dependent aminotransferase family. OAT subfamily. It depends on pyridoxal 5'-phosphate as a cofactor.

The protein localises to the cytoplasm. The enzyme catalyses a 2-oxocarboxylate + L-ornithine = L-glutamate 5-semialdehyde + an L-alpha-amino acid. It participates in amino-acid biosynthesis; L-proline biosynthesis; L-glutamate 5-semialdehyde from L-ornithine: step 1/1. Functionally, catalyzes the interconversion of ornithine to glutamate semialdehyde. This chain is Ornithine aminotransferase 2, found in Staphylococcus aureus (strain COL).